A 502-amino-acid polypeptide reads, in one-letter code: RNA polymerase sigma factor sigA (502 aa).

The transit peptide at 1–23 (MATAAVIGLNTGKRLLSSSFYHS) directs the protein to the chloroplast. Over residues 57 to 71 (YSPSFPSSNRHTQSA) the composition is skewed to polar residues. The disordered stretch occupies residues 57-92 (YSPSFPSSNRHTQSAKALKESVDVASTEKPWLPNGT). The residue at position 170 (Thr-170) is a Phosphothreonine. The Polymerase core binding motif lies at 287–300 (DLVQGGLIGLLRGI). Positions 461–480 (WEDISKRIGLSRERVRQVGL) form a DNA-binding region, H-T-H motif.

It belongs to the sigma-70 factor family. Interacts with SIB1 in chloroplast. Binds to CSK. Post-translationally, the phosphorylation of Thr-170 mediated by oxidative conditions of plastoquinone (PQ) changes the promoter specificity, selectively inhibiting the transcription of the psaA gene, which encodes a PS-I protein. Phosphorylation of the holoenzyme occurs in the dark. This phosphorylation in response to plastoquinone redox state modification is mediated by CSK. As to expression, highly expressed in leaves, and to a lesser extent in roots. Expressed in old seedlings (8 days), cotyledons, hypocotyls, leaves, sepals and siliques.

Its subcellular location is the plastid. The protein resides in the chloroplast. Essential protein. Sigma factors are initiation factors that promote the attachment of plastid-encoded RNA polymerase (PEP) to specific initiation sites and are then released. Controls the transcription of the psaA gene and thus modulates photosystem stoichiometry. Thereby maintains a harmonious electron flow and photosynthetic efficiency. The sequence is that of RNA polymerase sigma factor sigA (SIGA) from Arabidopsis thaliana (Mouse-ear cress).